The primary structure comprises 591 residues: L-lactate dehydrogenase (cytochrome) (591 aa).

The transit peptide at 1–80 (MLKYKPLLKI…LNWHNGQIDN (80 aa)) directs the protein to the mitochondrion. The Cytochrome b5 heme-binding domain occupies 88 to 165 (KQKISPAEVA…APEKKLGPLQ (78 aa)). Residues His-123, His-146, Tyr-177, Gln-219, and Tyr-223 each contribute to the heme b site. Positions 197–563 (PPLDNIINLY…KPDLLDLSTL (367 aa)) constitute an FMN hydroxy acid dehydrogenase domain. Tyr-223 contributes to the pyruvate binding site. FMN contacts are provided by residues 275 to 278 (SATA), Ser-308, and Gln-332. Tyr-334 contacts pyruvate. Thr-360 contacts FMN. Lys-376 is a heme b binding site. Lys-429 contacts FMN. The pyruvate site is built by His-453 and Arg-456. The active-site Proton acceptor is His-453. FMN is bound by residues 489-493 (DGGVR) and 512-513 (GR).

In the N-terminal section; belongs to the cytochrome b5 family. The protein in the C-terminal section; belongs to the FMN-dependent alpha-hydroxy acid dehydrogenase family. In terms of assembly, homotetramer. The cofactor is FMN. Heme b serves as cofactor.

The protein resides in the mitochondrion intermembrane space. It carries out the reaction (S)-lactate + 2 Fe(III)-[cytochrome c] = 2 Fe(II)-[cytochrome c] + pyruvate + 2 H(+). In terms of biological role, catalyzes the oxidation of (S)-lactate (L-lactate) to pyruvate with subsequent transfer of electrons to cytochrome c. Is involved in the utilization of (S)-lactate as a sole source of carbon for growth. Can also use ferricyanide as an electron acceptor in vitro. The protein is L-lactate dehydrogenase (cytochrome) (CYB2) of Saccharomyces cerevisiae (strain ATCC 204508 / S288c) (Baker's yeast).